A 151-amino-acid polypeptide reads, in one-letter code: Putative pre-16S rRNA nuclease (151 aa).

The protein belongs to the YqgF nuclease family.

It localises to the cytoplasm. Its function is as follows. Could be a nuclease involved in processing of the 5'-end of pre-16S rRNA. The chain is Putative pre-16S rRNA nuclease from Nostoc sp. (strain PCC 7120 / SAG 25.82 / UTEX 2576).